Reading from the N-terminus, the 252-residue chain is Chitooligosaccharide deacetylase (252 aa).

Positions 61 and 125 each coordinate Mg(2+).

This sequence belongs to the YdjC deacetylase family. ChbG subfamily. As to quaternary structure, homodimer. Mg(2+) is required as a cofactor.

It is found in the cytoplasm. The catalysed reaction is N,N'-diacetylchitobiose + H2O = N-acetyl-beta-D-glucosaminyl-(1-&gt;4)-D-glucosamine + acetate. The enzyme catalyses diacetylchitobiose-6'-phosphate + H2O = N'-monoacetylchitobiose-6'-phosphate + acetate. It participates in glycan degradation; chitin degradation. Its function is as follows. Involved in the degradation of chitin. ChbG is essential for growth on the acetylated chitooligosaccharides chitobiose and chitotriose but is dispensable for growth on cellobiose and chitosan dimer, the deacetylated form of chitobiose. Deacetylation of chitobiose-6-P and chitotriose-6-P is necessary for both the activation of the chb promoter by the regulatory protein ChbR and the hydrolysis of phosphorylated beta-glucosides by the phospho-beta-glucosidase ChbF. Catalyzes the removal of only one acetyl group from chitobiose-6-P to yield monoacetylchitobiose-6-P, the inducer of ChbR and the substrate of ChbF. The chain is Chitooligosaccharide deacetylase from Escherichia coli O139:H28 (strain E24377A / ETEC).